The primary structure comprises 242 residues: N-glycosylase/DNA lyase (242 aa).

3 residues coordinate 8-oxoguanine: Gln-25, Ser-52, and Trp-63. The tract at residues 119-183 (KSYYRDMNRL…VDARIERITR (65 aa)) is helix-hairpin-helix. Catalysis depends on Lys-143, which acts as the Schiff-base intermediate with DNA. Residues Phe-147 and Pro-173 each contribute to the 8-oxoguanine site. Residue Asp-175 is part of the active site. 8-oxoguanine contacts are provided by Asp-209 and Trp-213.

It belongs to the archaeal N-glycosylase/DNA lyase (AGOG) family.

The catalysed reaction is 2'-deoxyribonucleotide-(2'-deoxyribose 5'-phosphate)-2'-deoxyribonucleotide-DNA = a 3'-end 2'-deoxyribonucleotide-(2,3-dehydro-2,3-deoxyribose 5'-phosphate)-DNA + a 5'-end 5'-phospho-2'-deoxyribonucleoside-DNA + H(+). Functionally, DNA repair enzyme that is part of the base excision repair (BER) pathway; protects from oxidative damage by removing the major product of DNA oxidation, 8-oxoguanine (GO), from single- and double-stranded DNA substrates. The polypeptide is N-glycosylase/DNA lyase (Methanopyrus kandleri (strain AV19 / DSM 6324 / JCM 9639 / NBRC 100938)).